Here is a 257-residue protein sequence, read N- to C-terminus: Snake venom serine protease Dav-KN (257 aa).

The signal sequence occupies residues 1 to 18 (MVLIRVLANLLILQLSYA). A propeptide spanning residues 19-24 (QKSSEL) is cleaved from the precursor. Residues 25–248 (VIGGDECNIN…HLDWIKGIIA (224 aa)) form the Peptidase S1 domain. Cystine bridges form between C31–C162, C49–C65, C97–C255, C173–C188, and C199–C224. Catalysis depends on charge relay system residues H64 and D109. Residue S203 is the Charge relay system of the active site.

It belongs to the peptidase S1 family. Snake venom subfamily. Monomer. Expressed by the venom gland.

It localises to the secreted. Its function is as follows. Snake venom serine protease that may act in the hemostasis system of the prey. The chain is Snake venom serine protease Dav-KN from Deinagkistrodon acutus (Hundred-pace snake).